The sequence spans 160 residues: Sec-independent protein translocase protein TatB (160 aa).

A helical membrane pass occupies residues 1–21; it reads MFGMGFFEILVVLIVAIIFLG. The disordered stretch occupies residues 118-160; the sequence is HLNEEVSNEEALNKEVSSDESPKEVQLTTDNNAKEHDKEKEHV. Composition is skewed to basic and acidic residues over residues 128–140 and 149–160; these read ALNK…ESPK and NAKEHDKEKEHV.

The protein belongs to the TatB family. The Tat system comprises two distinct complexes: a TatABC complex, containing multiple copies of TatA, TatB and TatC subunits, and a separate TatA complex, containing only TatA subunits. Substrates initially bind to the TatABC complex, which probably triggers association of the separate TatA complex to form the active translocon.

Its subcellular location is the cell inner membrane. In terms of biological role, part of the twin-arginine translocation (Tat) system that transports large folded proteins containing a characteristic twin-arginine motif in their signal peptide across membranes. Together with TatC, TatB is part of a receptor directly interacting with Tat signal peptides. TatB may form an oligomeric binding site that transiently accommodates folded Tat precursor proteins before their translocation. In Helicobacter pylori (strain J99 / ATCC 700824) (Campylobacter pylori J99), this protein is Sec-independent protein translocase protein TatB.